A 240-amino-acid chain; its full sequence is Glutathione S-transferase theta-1 (240 aa).

Positions 2–82 constitute a GST N-terminal domain; it reads GLELYLDLLS…YLTRKYKVPD (81 aa). Glutathione is bound by residues His-40, 53 to 54, and 66 to 67; these read KV and ES. In terms of domain architecture, GST C-terminal spans 88 to 220; the sequence is DLQARARVDE…HEVILKAKDF (133 aa).

The protein belongs to the GST superfamily. Theta family. In terms of assembly, homodimer. Found in erythrocyte. Expressed at low levels in liver. In lung, expressed at low levels in club cells and ciliated cells at the alveolar/bronchiolar junction. Absent from epithelial cells of larger bronchioles.

Its subcellular location is the cytoplasm. It carries out the reaction RX + glutathione = an S-substituted glutathione + a halide anion + H(+). Its function is as follows. Conjugation of reduced glutathione to a wide number of exogenous and endogenous hydrophobic electrophiles. Acts on 1,2-epoxy-3-(4-nitrophenoxy)propane, phenethylisothiocyanate 4-nitrobenzyl chloride and 4-nitrophenethyl bromide. Displays glutathione peroxidase activity with cumene hydroperoxide. In Homo sapiens (Human), this protein is Glutathione S-transferase theta-1 (GSTT1).